A 57-amino-acid chain; its full sequence is uncharacterized protein (57 aa).

A helical transmembrane segment spans residues 15–37 (GLAGLICIGLTISSGFSGSSILI).

The protein localises to the membrane. This is an uncharacterized protein from Dictyostelium discoideum (Social amoeba).